A 344-amino-acid polypeptide reads, in one-letter code: Nicotinate-nucleotide--dimethylbenzimidazole phosphoribosyltransferase (344 aa).

Residue E310 is the Proton acceptor of the active site.

Belongs to the CobT family.

It carries out the reaction 5,6-dimethylbenzimidazole + nicotinate beta-D-ribonucleotide = alpha-ribazole 5'-phosphate + nicotinate + H(+). The protein operates within nucleoside biosynthesis; alpha-ribazole biosynthesis; alpha-ribazole from 5,6-dimethylbenzimidazole: step 1/2. Functionally, catalyzes the synthesis of alpha-ribazole-5'-phosphate from nicotinate mononucleotide (NAMN) and 5,6-dimethylbenzimidazole (DMB). This Shewanella amazonensis (strain ATCC BAA-1098 / SB2B) protein is Nicotinate-nucleotide--dimethylbenzimidazole phosphoribosyltransferase.